The chain runs to 709 residues: F-box only protein 40 (709 aa).

The TRAF-type zinc-finger motif lies at 53–112 (EHQLLCPLEQVPCLNSEYGCPLSMSRHKLAKHLQVCPASVVCCSMEWNRWPNVDSETTLH). The tract at residues 232-280 (TNSSASCESKNKNDSEKEQISSGHNMVEGEGAPKKKEPQENQKQQDVRT) is disordered. Composition is skewed to basic and acidic residues over residues 240–250 (SKNKNDSEKEQ) and 262–277 (GAPK…KQQD). The 55-residue stretch at 570-624 (QNSLTSLPLEILKYIAGFLDSVSLAQLSQVSVLMRNICATLLQERGMVLLQWKKK) folds into the F-box domain.

Directly interacts with SKP1 and CUL1. As to expression, expressed only in heart and skeletal muscle.

It is found in the cytoplasm. In terms of biological role, probable substrate-recognition component of the SCF (SKP1-CUL1-F-box protein)-type E3 ubiquitin ligase complex that may function in myogenesis. This chain is F-box only protein 40 (FBXO40), found in Homo sapiens (Human).